The sequence spans 449 residues: Phosphoglucosamine mutase (449 aa).

Residue S101 is the Phosphoserine intermediate of the active site. Mg(2+) contacts are provided by S101, D243, D245, and D247. S101 carries the post-translational modification Phosphoserine.

It belongs to the phosphohexose mutase family. Mg(2+) is required as a cofactor. In terms of processing, activated by phosphorylation.

The catalysed reaction is alpha-D-glucosamine 1-phosphate = D-glucosamine 6-phosphate. In terms of biological role, catalyzes the conversion of glucosamine-6-phosphate to glucosamine-1-phosphate. This is Phosphoglucosamine mutase from Syntrophobacter fumaroxidans (strain DSM 10017 / MPOB).